Reading from the N-terminus, the 186-residue chain is Peptide deformylase (186 aa).

Fe cation contacts are provided by cysteine 113 and histidine 156. The active site involves glutamate 157. Position 160 (histidine 160) interacts with Fe cation.

It belongs to the polypeptide deformylase family. Requires Fe(2+) as cofactor.

The catalysed reaction is N-terminal N-formyl-L-methionyl-[peptide] + H2O = N-terminal L-methionyl-[peptide] + formate. Functionally, removes the formyl group from the N-terminal Met of newly synthesized proteins. Requires at least a dipeptide for an efficient rate of reaction. N-terminal L-methionine is a prerequisite for activity but the enzyme has broad specificity at other positions. In Ligilactobacillus salivarius (strain UCC118) (Lactobacillus salivarius), this protein is Peptide deformylase.